Reading from the N-terminus, the 184-residue chain is Putative DNA-directed RNA polymerase subunit 454R (184 aa).

Belongs to the archaeal Rpo5/eukaryotic RPB5 RNA polymerase subunit family.

Functionally, component of the DNA-dependent RNA polymerase that catalyzes the transcription in the cytoplasm of viral DNA into RNA using the four ribonucleoside triphosphates as substrates. The polypeptide is Putative DNA-directed RNA polymerase subunit 454R (Invertebrate iridescent virus 6 (IIV-6)).